We begin with the raw amino-acid sequence, 223 residues long: Ribonuclease 3 (223 aa).

Residues Leu5–Asp127 form the RNase III domain. Glu40 serves as a coordination point for Mg(2+). The active site involves Asp44. Mg(2+) contacts are provided by Asp113 and Glu116. Residue Glu116 is part of the active site. A DRBM domain is found at Asp154–Asn223.

This sequence belongs to the ribonuclease III family. Homodimer. Mg(2+) serves as cofactor.

It is found in the cytoplasm. It carries out the reaction Endonucleolytic cleavage to 5'-phosphomonoester.. In terms of biological role, digests double-stranded RNA. Involved in the processing of primary rRNA transcript to yield the immediate precursors to the large and small rRNAs (23S and 16S). Processes some mRNAs, and tRNAs when they are encoded in the rRNA operon. Processes pre-crRNA and tracrRNA of type II CRISPR loci if present in the organism. This Aliivibrio fischeri (strain ATCC 700601 / ES114) (Vibrio fischeri) protein is Ribonuclease 3.